The sequence spans 198 residues: Ribonuclease HII (198 aa).

Positions 11–198 constitute an RNase H type-2 domain; it reads NLIAGVDEVG…GPVKRVLGLV (188 aa). A divalent metal cation-binding residues include D17, E18, and D109.

Belongs to the RNase HII family. The cofactor is Mn(2+). Mg(2+) is required as a cofactor.

The protein resides in the cytoplasm. The enzyme catalyses Endonucleolytic cleavage to 5'-phosphomonoester.. Endonuclease that specifically degrades the RNA of RNA-DNA hybrids. The sequence is that of Ribonuclease HII from Yersinia enterocolitica serotype O:8 / biotype 1B (strain NCTC 13174 / 8081).